The sequence spans 123 residues: Galanin peptides (123 aa).

The N-terminal stretch at 1-19 (MPRGCALLLASLLLASALS) is a signal peptide. Positions 20–30 (ATLGLGSPVKE) are excised as a propeptide. Ala61 bears the Alanine amide mark. Residues Ser116 and Ser117 each carry the phosphoserine modification.

This sequence belongs to the galanin family.

It is found in the secreted. Endocrine hormone of the central and peripheral nervous systems that binds and activates the G protein-coupled receptors GALR1, GALR2, and GALR3. This small neuropeptide may regulate diverse physiologic functions including contraction of smooth muscle of the gastrointestinal and genitourinary tract, growth hormone and insulin release and adrenal secretion. The protein is Galanin peptides (GAL) of Sus scrofa (Pig).